Here is a 123-residue protein sequence, read N- to C-terminus: Cytochrome c-555 (123 aa).

The first 27 residues, 1 to 27, serve as a signal peptide directing secretion; sequence MDHKKTSIRTTALAALVLGAVAAPAFS. Heme c is bound by residues C46, C49, H50, and M86.

In terms of processing, binds 1 heme c group covalently per subunit.

This Methylococcus capsulatus (strain ATCC 33009 / NCIMB 11132 / Bath) protein is Cytochrome c-555.